The sequence spans 128 residues: MITPKGTHDAVAKFQKTDLHQDLDYIVLQQRRTQLETLINERESFVKNLCSLFHKIQNTKNYQEFVDVLAENRDLLREIFTVENGFQKQKWISNDDIPQIDWDKFALDINAYIAENDQLLALYEDGLL.

It is found in the cytoplasm. Its subcellular location is the nucleus. The sequence is that of ADA histone acetyltransferase complex component 2 (AHC2) from Saccharomyces cerevisiae (strain ATCC 204508 / S288c) (Baker's yeast).